Here is a 68-residue protein sequence, read N- to C-terminus: UPF0434 protein BTH_I0741 (68 aa).

Belongs to the UPF0434 family.

This Burkholderia thailandensis (strain ATCC 700388 / DSM 13276 / CCUG 48851 / CIP 106301 / E264) protein is UPF0434 protein BTH_I0741.